The following is a 213-amino-acid chain: Protein FAM156A/FAM156B (213 aa).

Residue Met-1 is modified to N-acetylmethionine. Positions 1-62 (MDPLQKRNPA…SQAVPLPEGL (62 aa)) are disordered. Residues 8–37 (NPASPSKSSPMTAAETSQEGPAPSQPSYSE) show a composition bias toward polar residues. Ser-114 carries the post-translational modification Phosphoserine. The helical transmembrane segment at 154–170 (WETLVQGLSGLTLSLGT) threads the bilayer. Residues 165–198 (TLSLGTNQPGPLPEAALQPQETEEKRQRERQQES) form a disordered region. Basic and acidic residues predominate over residues 186 to 197 (TEEKRQRERQQE).

Its subcellular location is the membrane. This is Protein FAM156A/FAM156B (FAM156A) from Homo sapiens (Human).